The sequence spans 25 residues: Chitinolytic alpha-amylase inhibitor PvCAI (25 aa).

In terms of assembly, homodimer.

It carries out the reaction Random endo-hydrolysis of N-acetyl-beta-D-glucosaminide (1-&gt;4)-beta-linkages in chitin and chitodextrins.. Its function is as follows. Alpha-amylase inhibitor, active against Z.subfasciatus alpha-amylase (ZSA) but not porcine pancreatic alpha-amylase (PPA). Has chitinase activity. The polypeptide is Chitinolytic alpha-amylase inhibitor PvCAI (Phaseolus vulgaris (Kidney bean)).